We begin with the raw amino-acid sequence, 332 residues long: D-galactose/methyl-galactoside binding periplasmic protein MglB (332 aa).

The signal sequence occupies residues 1-23; that stretch reads MNKKVLTLSAVMASMLFGAAAHA. Beta-D-galactose-binding residues include D37 and N114. Residues D37 and N114 each contribute to the beta-D-glucose site. D157, N159, D161, Q163, and Q165 together coordinate Ca(2+). The beta-D-galactose site is built by H175, D177, and R181. Positions 175, 177, and 181 each coordinate beta-D-glucose. E228 provides a ligand contact to Ca(2+). Positions 234, 259, and 279 each coordinate beta-D-galactose. Residues N234, D259, and N279 each contribute to the beta-D-glucose site.

This sequence belongs to the bacterial solute-binding protein 2 family. As to quaternary structure, the ABC transporter complex is composed of one ATP-binding protein (MglA), two transmembrane proteins (MglC) and a solute-binding protein (MglB).

The protein localises to the periplasm. Functionally, part of the ABC transporter complex MglABC involved in galactose/methyl galactoside import. In addition, binds D-galactose and D-glucose and plays a role in the chemotaxis towards these two sugars by interacting with the Trg chemoreceptor. In Escherichia coli O6:H1 (strain CFT073 / ATCC 700928 / UPEC), this protein is D-galactose/methyl-galactoside binding periplasmic protein MglB (mglB).